Consider the following 101-residue polypeptide: Small ribosomal subunit protein bS18c (101 aa).

The protein belongs to the bacterial ribosomal protein bS18 family. In terms of assembly, part of the 30S ribosomal subunit.

The protein resides in the plastid. It localises to the chloroplast. The polypeptide is Small ribosomal subunit protein bS18c (Coffea arabica (Arabian coffee)).